Reading from the N-terminus, the 451-residue chain is NAC domain containing protein 52 (451 aa).

A disordered region spans residues M1–A21. Positions L27–K178 constitute an NAC domain. A DNA-binding region spans residues L126–P184. Disordered regions lie at residues D255–T337 and K370–D400. The span at Q256–N270 shows a compositional bias: basic and acidic residues. Positions N272–R292 form a coiled coil. The segment covering E318–T337 has biased composition (low complexity). Over residues K370–P384 the composition is skewed to basic and acidic residues. Positions V398 to N446 form a coiled coil.

In terms of assembly, interacts with JMJ14 and NAC050. In terms of tissue distribution, mostly expressed in floral organs, and, at low levels, in other organs.

It localises to the nucleus. Its function is as follows. Transcriptional repressor that binds to the motif 5'-(C/T)A(C/A)G-3' in the promoter of target genes. Also binds to the 5'-CTTGNNNNNCAAG-3' consensus sequence in chromatin. Can bind to the mitochondrial dysfunction motif (MDM) present in the upstream regions of mitochondrial dysfunction stimulon (MDS) genes involved in mitochondrial retrograde regulation (MRR). Together with NAC050 and JMJ14, regulates gene expression and flowering time by associating with the histone demethylase JMJ14, probably by the promotion of RNA-mediated gene silencing. Regulates siRNA-dependent post-transcriptional gene silencing (PTGS) through SGS3 expression modulation. Required during pollen development. The chain is NAC domain containing protein 52 from Arabidopsis thaliana (Mouse-ear cress).